Consider the following 362-residue polypeptide: Glucuronokinase 1 (362 aa).

Residue 126 to 136 participates in ATP binding; the sequence is PRQTGLSGSSA. Aspartate 179 functions as the Proton acceptor in the catalytic mechanism.

This sequence belongs to the GHMP kinase family. It depends on Mg(2+) as a cofactor. Mn(2+) is required as a cofactor. Requires Co(2+) as cofactor. As to expression, highly expressed in pollen. Detected in seedlings, inflorescences, seeds, leaves and roots.

The enzyme catalyses D-glucuronate + ATP = 1-phospho-alpha-D-glucuronate + ADP + H(+). Its function is as follows. Sugar-1-kinase with a strict substrate specificity for D-glucuronic acid and ATP. Involved in the biosynthesis of UDP-glucuronic acid (UDP-GlcA), providing nucleotide sugars for cell-wall polymers. May be also involved in a salvage pathway for glucuronic acid. In Arabidopsis thaliana (Mouse-ear cress), this protein is Glucuronokinase 1 (GLCAK1).